A 344-amino-acid chain; its full sequence is Phosphoribosylformylglycinamidine cyclo-ligase (344 aa).

It belongs to the AIR synthase family.

It is found in the cytoplasm. The enzyme catalyses 2-formamido-N(1)-(5-O-phospho-beta-D-ribosyl)acetamidine + ATP = 5-amino-1-(5-phospho-beta-D-ribosyl)imidazole + ADP + phosphate + H(+). The protein operates within purine metabolism; IMP biosynthesis via de novo pathway; 5-amino-1-(5-phospho-D-ribosyl)imidazole from N(2)-formyl-N(1)-(5-phospho-D-ribosyl)glycinamide: step 2/2. This is Phosphoribosylformylglycinamidine cyclo-ligase from Neisseria meningitidis serogroup C (strain 053442).